The sequence spans 314 residues: Porphobilinogen deaminase (314 aa).

S-(dipyrrolylmethanemethyl)cysteine is present on C234.

It belongs to the HMBS family. As to quaternary structure, monomer. It depends on dipyrromethane as a cofactor.

It catalyses the reaction 4 porphobilinogen + H2O = hydroxymethylbilane + 4 NH4(+). Its pathway is porphyrin-containing compound metabolism; protoporphyrin-IX biosynthesis; coproporphyrinogen-III from 5-aminolevulinate: step 2/4. Functionally, tetrapolymerization of the monopyrrole PBG into the hydroxymethylbilane pre-uroporphyrinogen in several discrete steps. The protein is Porphobilinogen deaminase of Mycobacterium ulcerans (strain Agy99).